We begin with the raw amino-acid sequence, 181 residues long: ATP synthase subunit delta (181 aa).

The protein belongs to the ATPase delta chain family. As to quaternary structure, F-type ATPases have 2 components, F(1) - the catalytic core - and F(0) - the membrane proton channel. F(1) has five subunits: alpha(3), beta(3), gamma(1), delta(1), epsilon(1). F(0) has three main subunits: a(1), b(2) and c(10-14). The alpha and beta chains form an alternating ring which encloses part of the gamma chain. F(1) is attached to F(0) by a central stalk formed by the gamma and epsilon chains, while a peripheral stalk is formed by the delta and b chains.

It localises to the cell inner membrane. In terms of biological role, f(1)F(0) ATP synthase produces ATP from ADP in the presence of a proton or sodium gradient. F-type ATPases consist of two structural domains, F(1) containing the extramembraneous catalytic core and F(0) containing the membrane proton channel, linked together by a central stalk and a peripheral stalk. During catalysis, ATP synthesis in the catalytic domain of F(1) is coupled via a rotary mechanism of the central stalk subunits to proton translocation. Its function is as follows. This protein is part of the stalk that links CF(0) to CF(1). It either transmits conformational changes from CF(0) to CF(1) or is implicated in proton conduction. The protein is ATP synthase subunit delta of Chlorobaculum parvum (strain DSM 263 / NCIMB 8327) (Chlorobium vibrioforme subsp. thiosulfatophilum).